The chain runs to 362 residues: Poly(rC)-binding protein 2 (362 aa).

KH domains lie at 13 to 75 (TLTI…FAMI) and 97 to 162 (PVTL…VKQI). Residue Lys-115 forms a Glycyl lysine isopeptide (Lys-Gly) (interchain with G-Cter in SUMO2) linkage. Ser-169 is modified (phosphoserine). A Glycyl lysine isopeptide (Lys-Gly) (interchain with G-Cter in SUMO2) cross-link involves residue Lys-181. Phosphoserine is present on residues Ser-185 and Ser-268. The 65-residue stretch at 284–348 (TTSHELTIPN…ASISLAQYLI (65 aa)) folds into the KH 3 domain. A Glycyl lysine isopeptide (Lys-Gly) (interchain with G-Cter in SUMO2) cross-link involves residue Lys-319. Phosphoserine occurs at positions 361 and 362.

In terms of assembly, identified in a mRNP complex, at least composed of DHX9, DDX3X, ELAVL1, HNRNPU, IGF2BP1, ILF3, PABPC1, PCBP2, PTBP2, STAU1, STAU2, SYNCRIP and YBX1. Interacts with IFIH1 and RNF135. Interacts with MAVS (via C-terminus) and ITCH (via WW domains). Interacts with CGAS; preventing the formation of liquid-like droplets in which CGAS is activated. Post-translationally, phosphorylated. The non-phosphorylated form(s) exhibited the strongest poly(rC)-binding activity.

It is found in the nucleus. The protein resides in the cytoplasm. In terms of biological role, single-stranded nucleic acid binding protein that binds preferentially to oligo dC. Major cellular poly(rC)-binding protein. Also binds poly(rU). Acts as a negative regulator of antiviral signaling. Negatively regulates cellular antiviral responses mediated by MAVS signaling. It acts as an adapter between MAVS and the E3 ubiquitin ligase ITCH, therefore triggering MAVS ubiquitination and degradation. Negativeley regulates the cGAS-STING pathway via interaction with CGAS, preventing the formation of liquid-like droplets in which CGAS is activated. Together with PCBP1, required for erythropoiesis, possibly by regulating mRNA splicing. The polypeptide is Poly(rC)-binding protein 2 (Pcbp2) (Mus musculus (Mouse)).